The sequence spans 535 residues: CTP synthase (535 aa).

The tract at residues 1 to 267 (MTKYIFVTGG…DKLVCEHMKL (267 aa)) is amidoligase domain. Serine 13 is a CTP binding site. UTP is bound at residue serine 13. 14–19 (SLGKGI) lines the ATP pocket. An L-glutamine-binding site is contributed by tyrosine 54. Aspartate 71 is a binding site for ATP. Mg(2+)-binding residues include aspartate 71 and glutamate 141. CTP is bound by residues 148–150 (DIE), 188–193 (KTKPTQ), and lysine 224. Residues 188-193 (KTKPTQ) and lysine 224 each bind UTP. Positions 292–534 (TIGLVGKYVE…IGASVEAANQ (243 aa)) constitute a Glutamine amidotransferase type-1 domain. Residue glycine 354 participates in L-glutamine binding. Cysteine 381 serves as the catalytic Nucleophile; for glutamine hydrolysis. Residues 382–385 (LGMQ), glutamate 405, and arginine 462 contribute to the L-glutamine site. Active-site residues include histidine 507 and glutamate 509.

It belongs to the CTP synthase family. In terms of assembly, homotetramer. Interacts with BrxC.

The catalysed reaction is UTP + L-glutamine + ATP + H2O = CTP + L-glutamate + ADP + phosphate + 2 H(+). It catalyses the reaction L-glutamine + H2O = L-glutamate + NH4(+). The enzyme catalyses UTP + NH4(+) + ATP = CTP + ADP + phosphate + 2 H(+). The protein operates within pyrimidine metabolism; CTP biosynthesis via de novo pathway; CTP from UDP: step 2/2. Allosterically activated by GTP, when glutamine is the substrate; GTP has no effect on the reaction when ammonia is the substrate. The allosteric effector GTP functions by stabilizing the protein conformation that binds the tetrahedral intermediate(s) formed during glutamine hydrolysis. Inhibited by the product CTP, via allosteric rather than competitive inhibition. In terms of biological role, catalyzes the ATP-dependent amination of UTP to CTP with either L-glutamine or ammonia as the source of nitrogen. Regulates intracellular CTP levels through interactions with the four ribonucleotide triphosphates. The chain is CTP synthase from Bacillus subtilis (strain 168).